The primary structure comprises 178 residues: Oligoribonuclease (178 aa).

Residues 7-168 form the Exonuclease domain; sequence LIWIDLEMTG…DDIRESIAEL (162 aa). The active site involves Tyr-128.

Belongs to the oligoribonuclease family.

The protein resides in the cytoplasm. Its function is as follows. 3'-to-5' exoribonuclease specific for small oligoribonucleotides. The sequence is that of Oligoribonuclease from Francisella tularensis subsp. holarctica (strain OSU18).